Reading from the N-terminus, the 56-residue chain is Large ribosomal subunit protein eL37 (56 aa).

Zn(2+)-binding residues include Cys19, Cys22, Cys34, and Cys37. The C4-type zinc finger occupies 19-37; sequence CRRCGSVSLNVHTKQCTSC.

It belongs to the eukaryotic ribosomal protein eL37 family. Zn(2+) serves as cofactor.

Binds to the 23S rRNA. This Methanosarcina mazei (strain ATCC BAA-159 / DSM 3647 / Goe1 / Go1 / JCM 11833 / OCM 88) (Methanosarcina frisia) protein is Large ribosomal subunit protein eL37.